A 129-amino-acid polypeptide reads, in one-letter code: Natriuretic peptides B (129 aa).

A signal peptide spans 1–26; the sequence is MDPQKALSRTLLLLLFLHLSLLGCRS. Cys-107 and Cys-123 are oxidised to a cystine.

The protein belongs to the natriuretic peptide family. In terms of processing, the precursor molecule is proteolytically cleaved, possibly by FURIN or CORIN, to produce the active peptide. May undergo further proteolytic cleavage by various proteases such as DPP4, MME and possibly FAP, to give rise to a variety of shorter peptides. May be cleaved at Pro-99 by the prolyl endopeptidase FAP (seprase) activity (in vitro). May be degraded by IDE. During IDE degradation, the resulting products initially increase the activation of NPR1 and can also stimulate NPR2 to produce cGMP before the fragments are completely degraded and inactivated by IDE (in vitro).

It localises to the secreted. In terms of biological role, cardiac hormone that plays a key role in mediating cardio-renal homeostasis. May also function as a paracrine antifibrotic factor in the heart. Acts by specifically binding and stimulating NPR1 to produce cGMP, which in turn activates effector proteins that drive various biological responses. Involved in regulating the extracellular fluid volume and maintaining the fluid-electrolyte balance through natriuresis, diuresis, vasorelaxation, and inhibition of renin and aldosterone secretion. Binds the clearance receptor NPR3. This Ovis aries (Sheep) protein is Natriuretic peptides B (NPPB).